Here is a 499-residue protein sequence, read N- to C-terminus: ALBINO3-like protein 1, chloroplastic (499 aa).

The transit peptide at 1-45 (MSSTISLKPTHLILSSFSTGKVLQFRRSRFSHTPSSSSSRYRTLV) directs the protein to the chloroplast. Transmembrane regions (helical) follow at residues 115-135 (LSTV…TVLV), 184-204 (LAGI…PVWI), 263-283 (LAYL…IQIM), and 302-322 (LLPL…SLYW). Positions 378 to 499 (LKIPREKGGE…QQHSHETEKR (122 aa)) are disordered. Composition is skewed to basic and acidic residues over residues 379-420 (KIPR…RQKA), 430-452 (DKAH…KKTE), and 486-499 (HDTE…TEKR). Positions 397–436 (GERFRLLKEQEAKRRREKEERQKAEAALSNQNTDKAHEQD) form a coiled coil.

The protein belongs to the OXA1/ALB3/YidC (TC 2.A.9.2) family. Homodimer. Interacts with ALB3. Interacts with STIC2. In terms of tissue distribution, highly expressed in green tissues.

It localises to the plastid. It is found in the chloroplast thylakoid membrane. Its function is as follows. Required for the insertion of some light harvesting chlorophyll-binding proteins (LHCP) into the chloroplast thylakoid membrane. Plays a role in the accumulation of some cytochrome b6f components in the thylakoid membrane. Required for the assembly and/or stability of the F(1)F(0) ATP synthase in chloroplast thylakoid membranes. Functions to stabilize or promote assembly of F(1) during its attachment to the membrane-embedded F(0) part. Participates with STIC2 in thylakoid protein targeting. May function with a specific subset of thylakoidal proteins. This chain is ALBINO3-like protein 1, chloroplastic, found in Arabidopsis thaliana (Mouse-ear cress).